A 354-amino-acid chain; its full sequence is Inactive ADP-ribosyltransferase arh2 (354 aa).

Belongs to the ADP-ribosylglycohydrolase family. Expressed in heart (at protein level). A short form is detected in both heart and tadpole tail (at protein level).

The protein resides in the cytoplasm. It localises to the myofibril. It is found in the sarcomere. Required for myofibril assembly and outgrowth of the cardiac chambers in the developing heart. Appears to be catalytically inactive, showing no activity against O-acetyl-ADP-ribose. This chain is Inactive ADP-ribosyltransferase arh2 (adprhl1), found in Xenopus laevis (African clawed frog).